Here is a 323-residue protein sequence, read N- to C-terminus: Beta-ketoacyl-[acyl-carrier-protein] synthase III 1 (323 aa).

Residues C114 and H254 contribute to the active site. Positions 255–259 (QANLR) are ACP-binding. Residue N284 is part of the active site.

The protein belongs to the thiolase-like superfamily. FabH family. As to quaternary structure, homodimer.

Its subcellular location is the cytoplasm. It carries out the reaction malonyl-[ACP] + acetyl-CoA + H(+) = 3-oxobutanoyl-[ACP] + CO2 + CoA. It functions in the pathway lipid metabolism; fatty acid biosynthesis. Functionally, catalyzes the condensation reaction of fatty acid synthesis by the addition to an acyl acceptor of two carbons from malonyl-ACP. Catalyzes the first condensation reaction which initiates fatty acid synthesis and may therefore play a role in governing the total rate of fatty acid production. Possesses both acetoacetyl-ACP synthase and acetyl transacylase activities. Its substrate specificity determines the biosynthesis of branched-chain and/or straight-chain of fatty acids. In Lactiplantibacillus plantarum (strain ATCC BAA-793 / NCIMB 8826 / WCFS1) (Lactobacillus plantarum), this protein is Beta-ketoacyl-[acyl-carrier-protein] synthase III 1.